The sequence spans 355 residues: Holliday junction branch migration complex subunit RuvB (355 aa).

The large ATPase domain (RuvB-L) stretch occupies residues 4–190; that stretch reads TDKLAAERII…FGIVARLEFY (187 aa). ATP contacts are provided by residues L29, R30, G71, K74, T75, T76, 137–139, R180, Y190, and R227; that span reads EDY. T75 lines the Mg(2+) pocket. Residues 191 to 261 are small ATPAse domain (RuvB-S); it reads DADQLARIVR…VADAALAMLD (71 aa). The interval 264 to 355 is head domain (RuvB-H); it reads PVGFDLMDRK…RGMWDTPAGK (92 aa). 3 residues coordinate DNA: R300, R319, and R324.

The protein belongs to the RuvB family. In terms of assembly, homohexamer. Forms an RuvA(8)-RuvB(12)-Holliday junction (HJ) complex. HJ DNA is sandwiched between 2 RuvA tetramers; dsDNA enters through RuvA and exits via RuvB. An RuvB hexamer assembles on each DNA strand where it exits the tetramer. Each RuvB hexamer is contacted by two RuvA subunits (via domain III) on 2 adjacent RuvB subunits; this complex drives branch migration. In the full resolvosome a probable DNA-RuvA(4)-RuvB(12)-RuvC(2) complex forms which resolves the HJ.

The protein resides in the cytoplasm. It catalyses the reaction ATP + H2O = ADP + phosphate + H(+). In terms of biological role, the RuvA-RuvB-RuvC complex processes Holliday junction (HJ) DNA during genetic recombination and DNA repair, while the RuvA-RuvB complex plays an important role in the rescue of blocked DNA replication forks via replication fork reversal (RFR). RuvA specifically binds to HJ cruciform DNA, conferring on it an open structure. The RuvB hexamer acts as an ATP-dependent pump, pulling dsDNA into and through the RuvAB complex. RuvB forms 2 homohexamers on either side of HJ DNA bound by 1 or 2 RuvA tetramers; 4 subunits per hexamer contact DNA at a time. Coordinated motions by a converter formed by DNA-disengaged RuvB subunits stimulates ATP hydrolysis and nucleotide exchange. Immobilization of the converter enables RuvB to convert the ATP-contained energy into a lever motion, pulling 2 nucleotides of DNA out of the RuvA tetramer per ATP hydrolyzed, thus driving DNA branch migration. The RuvB motors rotate together with the DNA substrate, which together with the progressing nucleotide cycle form the mechanistic basis for DNA recombination by continuous HJ branch migration. Branch migration allows RuvC to scan DNA until it finds its consensus sequence, where it cleaves and resolves cruciform DNA. The polypeptide is Holliday junction branch migration complex subunit RuvB (Burkholderia ambifaria (strain ATCC BAA-244 / DSM 16087 / CCUG 44356 / LMG 19182 / AMMD) (Burkholderia cepacia (strain AMMD))).